A 183-amino-acid polypeptide reads, in one-letter code: Translation initiation factor IF-3 (183 aa).

This sequence belongs to the IF-3 family. As to quaternary structure, monomer.

The protein localises to the cytoplasm. In terms of biological role, IF-3 binds to the 30S ribosomal subunit and shifts the equilibrium between 70S ribosomes and their 50S and 30S subunits in favor of the free subunits, thus enhancing the availability of 30S subunits on which protein synthesis initiation begins. The polypeptide is Translation initiation factor IF-3 (Vibrio cholerae serotype O1 (strain ATCC 39315 / El Tor Inaba N16961)).